We begin with the raw amino-acid sequence, 636 residues long: Biosynthetic arginine decarboxylase (636 aa).

The residue at position 101 (lysine 101) is an N6-(pyridoxal phosphate)lysine. 286 to 296 (FDVGGGLAVDY) contributes to the substrate binding site.

It belongs to the Orn/Lys/Arg decarboxylase class-II family. SpeA subfamily. The cofactor is Mg(2+). Pyridoxal 5'-phosphate is required as a cofactor.

It carries out the reaction L-arginine + H(+) = agmatine + CO2. It participates in amine and polyamine biosynthesis; agmatine biosynthesis; agmatine from L-arginine: step 1/1. Catalyzes the biosynthesis of agmatine from arginine. This chain is Biosynthetic arginine decarboxylase, found in Shewanella amazonensis (strain ATCC BAA-1098 / SB2B).